We begin with the raw amino-acid sequence, 580 residues long: Isochorismate synthase, chloroplastic (580 aa).

The N-terminal 91 residues, 1-91 (MASITGHCVA…LAMERLSSAV (91 aa)), are a transit peptide targeting the chloroplast.

This sequence belongs to the isochorismate synthase family. Mg(2+) is required as a cofactor.

The protein resides in the plastid. The protein localises to the chloroplast. The enzyme catalyses chorismate = isochorismate. Its activity is regulated as follows. Not inhibited by Tyr, Phe or Trp. Functionally, involved in the synthesis of o-succinylbenzoic acid, 2,3-dihydroxybenzoic acid and salicylic acid (SA). This chain is Isochorismate synthase, chloroplastic, found in Catharanthus roseus (Madagascar periwinkle).